The chain runs to 116 residues: Proline-rich protein 9 (116 aa).

The chain is Proline-rich protein 9 (PRR9) from Homo sapiens (Human).